The sequence spans 385 residues: Glucans biosynthesis protein C (385 aa).

A run of 10 helical transmembrane segments spans residues 17 to 37 (AWLMLLGIPFHISLIYSSHTW), 60 to 80 (MQVFFVISGYFSYMLFLRYPL), 91 to 111 (VGIPMLTAIPLLTLPQFIMLQ), 137 to 157 (ISHLWFLLVLVVMTTLCVWIF), 173 to 193 (KFSMVKLSVIFLCLGIGYAVI), 212 to 232 (FIVMQTLFYLPFFILGALAFI), 239 to 259 (LFTTPSRGCTLAAALAFVAYL), 274 to 294 (TESVITMVLGLWMVNVVFSFG), 311 to 331 (ASLFIYLVHHPLTLFFGAYIT), and 338 to 358 (WLGFLCGLIFVVGIAIILYEI).

It belongs to the acyltransferase 3 family. OpgC subfamily.

It localises to the cell membrane. It participates in glycan metabolism; osmoregulated periplasmic glucan (OPG) biosynthesis. Functionally, necessary for the succinyl substitution of periplasmic glucans. Could catalyze the transfer of succinyl residues from the cytoplasmic side of the membrane to the nascent glucan backbones on the periplasmic side of the membrane. This chain is Glucans biosynthesis protein C, found in Shigella dysenteriae serotype 1 (strain Sd197).